We begin with the raw amino-acid sequence, 304 residues long: Glutaminase (304 aa).

Residues S63, N114, E158, N165, Y189, Y240, and V258 each coordinate substrate.

It belongs to the glutaminase family. As to quaternary structure, homotetramer.

The catalysed reaction is L-glutamine + H2O = L-glutamate + NH4(+). The sequence is that of Glutaminase from Shewanella baltica (strain OS155 / ATCC BAA-1091).